The primary structure comprises 447 residues: Na(+)-translocating NADH-quinone reductase subunit A (447 aa).

This sequence belongs to the NqrA family. In terms of assembly, composed of six subunits; NqrA, NqrB, NqrC, NqrD, NqrE and NqrF.

It carries out the reaction a ubiquinone + n Na(+)(in) + NADH + H(+) = a ubiquinol + n Na(+)(out) + NAD(+). Functionally, NQR complex catalyzes the reduction of ubiquinone-1 to ubiquinol by two successive reactions, coupled with the transport of Na(+) ions from the cytoplasm to the periplasm. NqrA to NqrE are probably involved in the second step, the conversion of ubisemiquinone to ubiquinol. The sequence is that of Na(+)-translocating NADH-quinone reductase subunit A from Klebsiella pneumoniae (strain 342).